The primary structure comprises 152 residues: Protein SprT-like (152 aa).

Positions 13-148 constitute a SprT-like domain; sequence NYVKKVSIED…FACGYCHGRL (136 aa). Zn(2+) is bound at residue His72. Glu73 is a catalytic residue. Residue His76 participates in Zn(2+) binding.

The protein belongs to the SprT family. Requires Zn(2+) as cofactor.

Its subcellular location is the cytoplasm. This is Protein SprT-like from Streptococcus agalactiae serotype III (strain NEM316).